A 378-amino-acid chain; its full sequence is Erythronate-4-phosphate dehydrogenase (378 aa).

Substrate-binding residues include Ser-45 and Thr-66. NAD(+) is bound by residues Asp-146 and Thr-175. Arg-208 is an active-site residue. Residue Asp-232 coordinates NAD(+). Residue Glu-237 is part of the active site. The active-site Proton donor is His-254. Gly-257 serves as a coordination point for NAD(+). Tyr-258 serves as a coordination point for substrate.

Belongs to the D-isomer specific 2-hydroxyacid dehydrogenase family. PdxB subfamily. Homodimer.

The protein localises to the cytoplasm. It catalyses the reaction 4-phospho-D-erythronate + NAD(+) = (R)-3-hydroxy-2-oxo-4-phosphooxybutanoate + NADH + H(+). It participates in cofactor biosynthesis; pyridoxine 5'-phosphate biosynthesis; pyridoxine 5'-phosphate from D-erythrose 4-phosphate: step 2/5. In terms of biological role, catalyzes the oxidation of erythronate-4-phosphate to 3-hydroxy-2-oxo-4-phosphonooxybutanoate. The protein is Erythronate-4-phosphate dehydrogenase of Escherichia coli O17:K52:H18 (strain UMN026 / ExPEC).